Reading from the N-terminus, the 957-residue chain is Glycine dehydrogenase (decarboxylating) 2 (957 aa).

The residue at position 707 (lysine 707) is an N6-(pyridoxal phosphate)lysine.

Belongs to the GcvP family. In terms of assembly, the glycine cleavage system is composed of four proteins: P, T, L and H. Requires pyridoxal 5'-phosphate as cofactor.

It catalyses the reaction N(6)-[(R)-lipoyl]-L-lysyl-[glycine-cleavage complex H protein] + glycine + H(+) = N(6)-[(R)-S(8)-aminomethyldihydrolipoyl]-L-lysyl-[glycine-cleavage complex H protein] + CO2. The glycine cleavage system catalyzes the degradation of glycine. The P protein binds the alpha-amino group of glycine through its pyridoxal phosphate cofactor; CO(2) is released and the remaining methylamine moiety is then transferred to the lipoamide cofactor of the H protein. The chain is Glycine dehydrogenase (decarboxylating) 2 (gcvP2) from Pseudomonas putida (strain ATCC 47054 / DSM 6125 / CFBP 8728 / NCIMB 11950 / KT2440).